The primary structure comprises 426 residues: tRNA(Ile)-lysidine synthase (426 aa).

27–32 contributes to the ATP binding site; it reads SGGADS.

It belongs to the tRNA(Ile)-lysidine synthase family.

The protein localises to the cytoplasm. It carries out the reaction cytidine(34) in tRNA(Ile2) + L-lysine + ATP = lysidine(34) in tRNA(Ile2) + AMP + diphosphate + H(+). Ligates lysine onto the cytidine present at position 34 of the AUA codon-specific tRNA(Ile) that contains the anticodon CAU, in an ATP-dependent manner. Cytidine is converted to lysidine, thus changing the amino acid specificity of the tRNA from methionine to isoleucine. This Bacteroides thetaiotaomicron (strain ATCC 29148 / DSM 2079 / JCM 5827 / CCUG 10774 / NCTC 10582 / VPI-5482 / E50) protein is tRNA(Ile)-lysidine synthase.